The sequence spans 633 residues: Chaperone protein HtpG (633 aa).

An a; substrate-binding region spans residues 1–344; that stretch reads MSLQPQAETL…SNDLPLNISR (344 aa). The b stretch occupies residues 345–560; that stretch reads ELLQSNEVIN…ENEMSGHLQR (216 aa). A c region spans residues 561-633; sequence LLIQTGQDFM…KGLNELLLDS (73 aa).

Belongs to the heat shock protein 90 family. In terms of assembly, homodimer.

The protein resides in the cytoplasm. Functionally, molecular chaperone. Has ATPase activity. The sequence is that of Chaperone protein HtpG from Coxiella burnetii (strain RSA 493 / Nine Mile phase I).